A 381-amino-acid chain; its full sequence is Alkanesulfonate monooxygenase (381 aa).

Belongs to the SsuD family. As to quaternary structure, homotetramer.

It catalyses the reaction an alkanesulfonate + FMNH2 + O2 = an aldehyde + FMN + sulfite + H2O + 2 H(+). Its function is as follows. Catalyzes the desulfonation of aliphatic sulfonates. The sequence is that of Alkanesulfonate monooxygenase from Escherichia coli O157:H7.